Reading from the N-terminus, the 384-residue chain is V-type proton ATPase subunit C (384 aa).

This sequence belongs to the V-ATPase C subunit family. As to quaternary structure, V-ATPase is a heteromultimeric enzyme made up of two complexes: the ATP-hydrolytic V1 complex and the proton translocation V0 complex. The V1 complex consists of three catalytic AB heterodimers that form a heterohexamer, three peripheral stalks each consisting of EG heterodimers, one central rotor including subunits D and F, and the regulatory subunits C and H. The proton translocation complex V0 consists of the proton transport subunit a, a ring of proteolipid subunits c9c'', rotary subunit d, subunits e and f, and the accessory subunits vah-19/Ac45 and vah-20/PRR. Interacts with V-type proton ATPase subunits a1 unc-32, a2 vha-5 and a3 vha-6. In terms of tissue distribution, expressed ubiquitously; higher levels are found in gastrointestinal and hypodermal cells, as well as H-shaped excretory cell.

The protein resides in the cytoplasm. The protein localises to the membrane. In terms of biological role, subunit of the V1 complex of vacuolar(H+)-ATPase (V-ATPase), a multisubunit enzyme composed of a peripheral complex (V1) that hydrolyzes ATP and a membrane integral complex (V0) that translocates protons. V-ATPase is responsible for acidifying and maintaining the pH of intracellular compartments and in some cell types, is targeted to the plasma membrane, where it is responsible for acidifying the extracellular environment. Subunit C is necessary for the assembly of the catalytic sector of the enzyme and is likely to have a specific function in its catalytic activity. Has roles in embryogenesis and ovulation. The polypeptide is V-type proton ATPase subunit C (Caenorhabditis elegans).